The sequence spans 515 residues: Fatty acyl-CoA reductase 1 (515 aa).

The Cytoplasmic portion of the chain corresponds to 1–465 (MVSIPEYYEG…ARKHLNKLRN (465 aa)). Residues 451 to 507 (SGLPAARKHLNKLRNIRYGFNTILVILIWRIFIARSQMARNIWYFVVSLCYKFLSYF) form a necessary and sufficient for PEX19-mediated localization into peroxisome membrane region. Residues 466–483 (IRYGFNTILVILIWRIFI) form a helical membrane-spanning segment. Over 484-515 (ARSQMARNIWYFVVSLCYKFLSYFRASSTMRY) the chain is Peroxisomal.

It belongs to the fatty acyl-CoA reductase family. In terms of assembly, interacts with PEX19; PEX19 mediates the targeting of FAR1 to peroxisomes.

It is found in the peroxisome membrane. It catalyses the reaction a long-chain fatty acyl-CoA + 2 NADPH + 2 H(+) = a long-chain primary fatty alcohol + 2 NADP(+) + CoA. It carries out the reaction hexadecanoyl-CoA + 2 NADPH + 2 H(+) = hexadecan-1-ol + 2 NADP(+) + CoA. The enzyme catalyses octadecanoyl-CoA + 2 NADPH + 2 H(+) = octadecan-1-ol + 2 NADP(+) + CoA. The catalysed reaction is (9Z)-octadecenoyl-CoA + 2 NADPH + 2 H(+) = (9Z)-octadecen-1-ol + 2 NADP(+) + CoA. It catalyses the reaction (9Z,12Z)-octadecadienoyl-CoA + 2 NADPH + 2 H(+) = (9Z,12Z)-octadecadien-1-ol + 2 NADP(+) + CoA. It carries out the reaction eicosanoyl-CoA + 2 NADPH + 2 H(+) = eicosan-1-ol + 2 NADP(+) + CoA. The enzyme catalyses 16-methylheptadecanoyl-CoA + 2 NADPH + 2 H(+) = 16-methylheptadecan-1-ol + 2 NADP(+) + CoA. The catalysed reaction is 18-methylnonadecanoyl-CoA + 2 NADPH + 2 H(+) = 18-methylnonadecan-1-ol + 2 NADP(+) + CoA. Catalyzes the reduction of saturated and unsaturated C16 or C18 fatty acyl-CoA to fatty alcohols. It plays an essential role in the production of ether lipids/plasmalogens which synthesis requires fatty alcohols. In parallel, it is also required for wax monoesters production since fatty alcohols also constitute a substrate for their synthesis. In terms of biological role, catalyzes the reduction of saturated and unsaturated C16 or C18 fatty acyl-CoA to fatty alcohols. It plays an essential role in the production of ether lipids/plasmalogens which synthesis requires fatty alcohols. In parallel, it is also required for wax monoesters production since fatty alcohols also constitute a substrate for their synthesis. The chain is Fatty acyl-CoA reductase 1 from Rattus norvegicus (Rat).